Consider the following 512-residue polypeptide: GMP synthase [glutamine-hydrolyzing] (512 aa).

The region spanning Thr7 to Asp197 is the Glutamine amidotransferase type-1 domain. Cys84 serves as the catalytic Nucleophile. Residues His171 and Glu173 contribute to the active site. Residues Trp198–Arg387 form the GMPS ATP-PPase domain. Ser225–Ala231 is a binding site for ATP.

In terms of assembly, homodimer.

It carries out the reaction XMP + L-glutamine + ATP + H2O = GMP + L-glutamate + AMP + diphosphate + 2 H(+). Its pathway is purine metabolism; GMP biosynthesis; GMP from XMP (L-Gln route): step 1/1. In terms of biological role, catalyzes the synthesis of GMP from XMP. This chain is GMP synthase [glutamine-hydrolyzing], found in Caldanaerobacter subterraneus subsp. tengcongensis (strain DSM 15242 / JCM 11007 / NBRC 100824 / MB4) (Thermoanaerobacter tengcongensis).